We begin with the raw amino-acid sequence, 78 residues long: MSGMRILTGSVALGGLTYAIWIIFSPGEERKKEILKSLPEANPVRMEETRKRNAIMLQVLKDAAETNDNIARGFGSQK.

The Mitochondrial matrix segment spans residues 1-5 (MSGMR). A helical transmembrane segment spans residues 6–26 (ILTGSVALGGLTYAIWIIFSP). Over 27-78 (GEERKKEILKSLPEANPVRMEETRKRNAIMLQVLKDAAETNDNIARGFGSQK) the chain is Mitochondrial intermembrane.

It belongs to the UQCC3 family. In terms of assembly, associates with the ubiquinol-cytochrome c reductase complex (mitochondrial respiratory chain complex III or cytochrome b-c1 complex).

It is found in the mitochondrion inner membrane. In terms of biological role, required for the assembly of the ubiquinol-cytochrome c reductase complex (mitochondrial respiratory chain complex III or cytochrome b-c1 complex), mediating cytochrome b recruitment and probably stabilization within the complex. Thereby, plays an important role in ATP production by mitochondria. Cardiolipin-binding protein, it may also control the cardiolipin composition of mitochondria membranes and their morphology. In Danio rerio (Zebrafish), this protein is Ubiquinol-cytochrome-c reductase complex assembly factor 3.